Reading from the N-terminus, the 290-residue chain is Membrane-spanning 4-domains subfamily A member 8 (290 aa).

The span at Met1–Lys21 shows a compositional bias: polar residues. Positions Met1–Pro25 are disordered. Over Met1–Gln108 the chain is Cytoplasmic. Residues Val109–Ile129 form a helical membrane-spanning segment. Residues Thr130–Pro138 are Extracellular-facing. A helical transmembrane segment spans residues Val139 to Leu159. Residues Ser160–Asn174 lie on the Cytoplasmic side of the membrane. Residues Gly175 to Ile195 traverse the membrane as a helical segment. Over Thr196–Thr220 the chain is Extracellular. The helical transmembrane segment at Gly221–Val241 threads the bilayer. The Cytoplasmic portion of the chain corresponds to Ser242 to Arg290.

The protein belongs to the MS4A family. As to expression, expressed strongly in intestine and colon and minimally in lung and ovary.

Its subcellular location is the membrane. Its function is as follows. May be involved in signal transduction as a component of a multimeric receptor complex. The protein is Membrane-spanning 4-domains subfamily A member 8 (Ms4a8) of Mus musculus (Mouse).